The following is a 261-amino-acid chain: Type III pantothenate kinase (261 aa).

6-13 (DAGNSNIT) contacts ATP. Substrate is bound by residues Y100 and 107–110 (GADR). The active-site Proton acceptor is the D109. D129 lines the K(+) pocket. ATP is bound at residue T132. T184 is a substrate binding site.

Belongs to the type III pantothenate kinase family. As to quaternary structure, homodimer. It depends on NH4(+) as a cofactor. K(+) serves as cofactor.

The protein localises to the cytoplasm. It catalyses the reaction (R)-pantothenate + ATP = (R)-4'-phosphopantothenate + ADP + H(+). The protein operates within cofactor biosynthesis; coenzyme A biosynthesis; CoA from (R)-pantothenate: step 1/5. Catalyzes the phosphorylation of pantothenate (Pan), the first step in CoA biosynthesis. This Solibacter usitatus (strain Ellin6076) protein is Type III pantothenate kinase.